Here is a 278-residue protein sequence, read N- to C-terminus: UPF0276 protein Ssed_2857 (278 aa).

This sequence belongs to the UPF0276 family.

The chain is UPF0276 protein Ssed_2857 from Shewanella sediminis (strain HAW-EB3).